A 178-amino-acid polypeptide reads, in one-letter code: Caveolin-1 (178 aa).

Ser-2 is modified (N-acetylserine). Position 2 is a phosphoserine (Ser-2). Residues 2–94 are required for homooligomerization; the sequence is SGGKYVDSEG…WKASFTTFTV (93 aa). At 2–104 the chain is on the cytoplasmic side; that stretch reads SGGKYVDSEG…TKYWFYRLLS (103 aa). Position 5 is an N6-acetyllysine; alternate (Lys-5). A Glycyl lysine isopeptide (Lys-Gly) (interchain with G-Cter in ubiquitin); alternate cross-link involves residue Lys-5. Tyr-6 is subject to Phosphotyrosine. Ser-9 is subject to Phosphoserine. At Tyr-14 the chain carries Phosphotyrosine; by ABL1. Tyr-25 bears the Phosphotyrosine mark. Residues Lys-26, Lys-30, Lys-39, Lys-47, and Lys-57 each participate in a glycyl lysine isopeptide (Lys-Gly) (interchain with G-Cter in ubiquitin) cross-link. The interval 82 to 94 is interaction with CAVIN3; sequence DGIWKASFTTFTV. Residues 105 to 125 constitute an intramembrane region (helical); it reads ALFGIPMALIWGIYFAILSFL. The Cytoplasmic segment spans residues 126–178; that stretch reads HIWAVVPCIKSFLIEIQCISRVYSIYVHTFCDPLFEAIGKIFSNIRINMQKEI. Positions 131 to 142 are interacts with SPRY1, SPRY2, SPRY3 and SPRY4; it reads VPCIKSFLIEIQ. 3 S-palmitoyl cysteine lipidation sites follow: Cys-133, Cys-143, and Cys-156. Residues 149-160 form an interacts with SPRY1, SPRY2, and SPRY4 region; it reads SIYVHTFCDPLF. Residues 167 to 178 are interacts with SPRY1, SPRY2, SPRY3 and SPRY4; the sequence is FSNIRINMQKEI.

It belongs to the caveolin family. In terms of assembly, homooligomer. Interacts (via the N-terminus) with DPP4; the interaction is direct. Forms a stable heterooligomeric complex with CAV2 that targets to lipid rafts and drives caveolae formation. Interacts with PACSIN2; this interaction induces membrane tubulation. Interacts with BMX, BTK, CTNNB1, CDH1, GLIPR2, JUP, NOSTRIN, SNAP25 and STX1A. Interacts with SLC7A9. Interacts with TGFBR1. Interacts with CAVIN3 (via leucine-zipper domain) in a cholesterol-sensitive manner. Interacts with CAVIN1. Interacts with EHD2 in a cholesterol-dependent manner. Forms a ternary complex with UBXN6 and VCP; mediates CAV1 targeting to lysosomes for degradation. Interacts with ABCG1; this interaction regulates ABCG1-mediated cholesterol efflux. Interacts with NEU3; this interaction enhances NEU3 sialidase activity within caveola. Interacts (via C-terminus) with SPRY1, SPRY2 (via C-terminus), SPRY3, and SPRY4. Phosphorylated at Tyr-14 by ABL1 in response to oxidative stress. In terms of processing, ubiquitinated. Undergo monoubiquitination and multi- and/or polyubiquitination. Monoubiquitination of N-terminal lysines promotes integration in a ternary complex with UBXN6 and VCP which promotes oligomeric CAV1 targeting to lysosomes for degradation. Ubiquitinated by ZNRF1; leading to degradation and modulation of the TLR4-mediated immune response.

It localises to the golgi apparatus membrane. The protein resides in the cell membrane. It is found in the membrane. Its subcellular location is the caveola. The protein localises to the membrane raft. In terms of biological role, may act as a scaffolding protein within caveolar membranes. Forms a stable heterooligomeric complex with CAV2 that targets to lipid rafts and drives caveolae formation. Mediates the recruitment of CAVIN proteins (CAVIN1/2/3/4) to the caveolae. Interacts directly with G-protein alpha subunits and can functionally regulate their activity. Involved in the costimulatory signal essential for T-cell receptor (TCR)-mediated T-cell activation. Its binding to DPP4 induces T-cell proliferation and NF-kappa-B activation in a T-cell receptor/CD3-dependent manner. Recruits CTNNB1 to caveolar membranes and may regulate CTNNB1-mediated signaling through the Wnt pathway. Negatively regulates TGFB1-mediated activation of SMAD2/3 by mediating the internalization of TGFBR1 from membrane rafts leading to its subsequent degradation. Binds 20(S)-hydroxycholesterol (20(S)-OHC). The polypeptide is Caveolin-1 (CAV1) (Otolemur garnettii (Small-eared galago)).